A 361-amino-acid polypeptide reads, in one-letter code: POU domain, class 3, transcription factor 4 (361 aa).

2 disordered regions span residues 99 to 131 (PHVA…GQPL) and 144 to 192 (MLEH…PTSD). Positions 122-131 (PSITSSGQPL) are enriched in polar residues. The span at 165–183 (VLREPPDHGELGSHHCQDH) shows a compositional bias: basic and acidic residues. Residues 186-260 (EETPTSDELE…LLNKWLEEAD (75 aa)) form the POU-specific domain. At Ser-265 the chain carries Phosphoserine. Positions 278–337 (KRKKRTSIEVSVKGVLETHFLKCPKPAAQEISSLADSLQLEKEVVRVWFCNRRQKEKRMT) form a DNA-binding region, homeobox.

Belongs to the POU transcription factor family. Class-3 subfamily. As to quaternary structure, interacts with HNRNPU. Brain specific.

The protein resides in the nucleus. Its function is as follows. Probable transcription factor which exert its primary action widely during early neural development and in a very limited set of neurons in the mature brain. This chain is POU domain, class 3, transcription factor 4 (POU3F4), found in Homo sapiens (Human).